A 195-amino-acid polypeptide reads, in one-letter code: BAG family molecular chaperone regulator 1A (195 aa).

Positions 6–72 constitute a Ubiquitin-like domain; it reads STVTIHYGNQ…KLGLKNHSKI (67 aa). Residues 78-98 are disordered; sequence HKQQRGSKEKDTVEPAPKAEA. The span at 83–98 shows a compositional bias: basic and acidic residues; it reads GSKEKDTVEPAPKAEA. The region spanning 109 to 190 is the BAG domain; the sequence is EIKAIDQYVD…KMLDHVDQTS (82 aa).

Binds to the ATPase domain of HSP70/HSC chaperones.

Functionally, inhibits the chaperone activity of HSP70/HSC70 by promoting substrate release. The sequence is that of BAG family molecular chaperone regulator 1A (bag101) from Schizosaccharomyces pombe (strain 972 / ATCC 24843) (Fission yeast).